A 553-amino-acid chain; its full sequence is MEDIMTSLLVATSRVVVTISLAYVPVKSAFAAPQNAAGLCSAIAASSIPASRISLPTTGAKIQSATLIGGSDPANQNGEYCKVIGQIKPVDPKAPDIIWQVNLPSVWNGKMLQYGGGGYNGSIPPTTDKTTLGLDVVPTPLTQGYVTFGSDSGHQAPNADDASFAKNDEAMLNYGYMHIKKVLDVAKVLVTERYEKPVTRVYFQGGSTGGREGLTAASRWPESYDGILTNYPTANFVGLRLWGAGLARAVYDDKSAGWIPPKLVERISKEALKSCDGLDGVEDGLVGNMQQCRAQSAVLVQSLACKSDVTGNPDDCLTQAQIERTLKIYHEGYSLPYQLANGINTYPGYNSLEGIMMQLGSEPQMRTPPVSGPNAHHSSRSFEFLQNFVQRDQPLNLLSFDIREPGKLKDRIVELSDVIGATRTDWSTFSDRGGKIIWLQGNDDPSVSPLGNAKLFESIVAKMGADKVKGFMRFFLVPGLAHGGGRFSPTWDNLAALDNWVEHDVPPSNPVVVDATKSSTKGRSRPLCEYPSWPKYKGDGDVAIASSFSCADD.

The signal sequence occupies residues 1–31; it reads MEDIMTSLLVATSRVVVTISLAYVPVKSAFA. Catalysis depends on S207, which acts as the Acyl-ester intermediate. An intrachain disulfide couples C275 to C292. D276, D279, V281, D283, and L285 together coordinate Ca(2+). Catalysis depends on charge relay system residues D444 and H482. The cysteines at positions 528 and 550 are disulfide-linked.

This sequence belongs to the tannase family.

This is an uncharacterized protein from Agrobacterium fabrum (strain C58 / ATCC 33970) (Agrobacterium tumefaciens (strain C58)).